Consider the following 633-residue polypeptide: Glutathione S-transferase C-terminal domain-containing protein (633 aa).

The 203-residue stretch at Leu130–Ala332 folds into the GST C-terminal domain. Positions Asn191 to Ser233 are disordered. A compositionally biased stretch (polar residues) spans Gln224 to Ser233. Ser233 bears the Phosphoserine mark.

This sequence belongs to the GSTCD family. In terms of tissue distribution, widely expressed in cell types relevant to airway function, including airway smooth muscle cells and epithelial cells.

It localises to the cytoplasm. This is Glutathione S-transferase C-terminal domain-containing protein (GSTCD) from Homo sapiens (Human).